A 949-amino-acid polypeptide reads, in one-letter code: Phosphocholine transferase AnkX (949 aa).

Residues 155–289 (LNPEQIPDLA…IFNTVEIIEQ (135 aa)) form the Fido domain. ANK repeat units lie at residues 391–420 (VGKT…DLSL), 424–453 (DGKT…SQED), 464–494 (HGKT…QINE), 498–527 (SGSS…DISD), 554–583 (LNKE…DIDI), 588–617 (DKAT…NTRL), 658–687 (NGNP…RVDF), 691–720 (LGNN…TLLH), 725–767 (ERRN…DLNK), and 771–800 (KGKT…HTNI).

It localises to the secreted. The protein localises to the host cytoplasm. It carries out the reaction [Rab1 protein]-L-serine + CDP-choline = [Rab1 protein]-O-phosphocholine-L-serine + CMP + H(+). Functionally, virulence effector that plays a role in hijacking the host vesicular trafficking by recruiting the small guanosine triphosphatase (GTPase) Rab1 to the cytosolic face of the Legionella-containing vacuole (LCVs). Acts as a phosphocholine transferase by mediating the addition of phosphocholine to Ser residues of host RAB1 (RAB1A, RAB1B or RAB1C) and RAB35, leading to displacement of GDP dissociation inhibitors (GDI). Phosphocholination of target proteins also impairs accessibility to GTPase effector LepB. Can act on both GDP-bound and GTP-bound Rab proteins. This Legionella pneumophila subsp. pneumophila (strain Philadelphia 1 / ATCC 33152 / DSM 7513) protein is Phosphocholine transferase AnkX (ankX).